Consider the following 886-residue polypeptide: uncharacterized protein (886 aa).

An N-terminal signal peptide occupies residues 1–20 (MKILKSLVLLVLFIVMPAKA). A run of 6 helical transmembrane segments spans residues 520–540 (VIIF…IEVI), 563–583 (TYFF…VVGA), 609–629 (LLFI…IITI), 647–667 (IIAF…IILM), 680–700 (ISTL…FLLI), and 771–791 (FLVL…SYGL).

Belongs to the TrbL/VirB6 family.

The protein localises to the cell membrane. This is an uncharacterized protein from Rickettsia typhi (strain ATCC VR-144 / Wilmington).